A 140-amino-acid chain; its full sequence is Large ribosomal subunit protein uL11 (140 aa).

Belongs to the universal ribosomal protein uL11 family. As to quaternary structure, part of the ribosomal stalk of the 50S ribosomal subunit. Interacts with L10 and the large rRNA to form the base of the stalk. L10 forms an elongated spine to which L12 dimers bind in a sequential fashion forming a multimeric L10(L12)X complex. In terms of processing, one or more lysine residues are methylated.

In terms of biological role, forms part of the ribosomal stalk which helps the ribosome interact with GTP-bound translation factors. The polypeptide is Large ribosomal subunit protein uL11 (Heliobacterium modesticaldum (strain ATCC 51547 / Ice1)).